Here is a 791-residue protein sequence, read N- to C-terminus: Subtilisin-like protease SBT5.6 (791 aa).

The N-terminal stretch at 1–20 is a signal peptide; that stretch reads MKKLTSLFPLLFLIPLLASC. A propeptide spans 21-108 (activation peptide); sequence AEEKQVYIVY…KSHPRKYEAH (88 aa). Positions 26–104 constitute an Inhibitor I9 domain; the sequence is VYIVYFGEHK…VSVFKSHPRK (79 aa). Residues 134 to 645 enclose the Peptidase S8 domain; it reads ADDRFRVGRN…SGHFRPTKAA (512 aa). Asp-160 serves as the catalytic Charge relay system. 2 N-linked (GlcNAc...) asparagine glycosylation sites follow: Asn-193 and Asn-219. Catalysis depends on His-235, which acts as the Charge relay system. The PA domain maps to 400–494; sequence FAPLVYASNV…VTPTVVDKIL (95 aa). Asn-417 carries N-linked (GlcNAc...) asparagine glycosylation. Ser-578 serves as the catalytic Charge relay system. N-linked (GlcNAc...) asparagine glycans are attached at residues Asn-666, Asn-713, and Asn-761.

Belongs to the peptidase S8 family.

The protein localises to the secreted. In Arabidopsis thaliana (Mouse-ear cress), this protein is Subtilisin-like protease SBT5.6.